Consider the following 134-residue polypeptide: Ribonuclease P protein component (134 aa).

This sequence belongs to the RnpA family. Consists of a catalytic RNA component (M1 or rnpB) and a protein subunit.

The enzyme catalyses Endonucleolytic cleavage of RNA, removing 5'-extranucleotides from tRNA precursor.. Its function is as follows. RNaseP catalyzes the removal of the 5'-leader sequence from pre-tRNA to produce the mature 5'-terminus. It can also cleave other RNA substrates such as 4.5S RNA. The protein component plays an auxiliary but essential role in vivo by binding to the 5'-leader sequence and broadening the substrate specificity of the ribozyme. The polypeptide is Ribonuclease P protein component (Pseudomonas putida (strain GB-1)).